The following is a 476-amino-acid chain: Adenosylhomocysteinase (476 aa).

Residues threonine 67, aspartate 142, and glutamate 202 each coordinate substrate. 203–205 (TTT) contacts NAD(+). Lysine 232 and aspartate 236 together coordinate substrate. NAD(+)-binding positions include asparagine 237, 266–271 (GYGDVG), glutamate 289, asparagine 324, 345–347 (IGH), and asparagine 390.

This sequence belongs to the adenosylhomocysteinase family. It depends on NAD(+) as a cofactor.

It localises to the cytoplasm. It catalyses the reaction S-adenosyl-L-homocysteine + H2O = L-homocysteine + adenosine. It functions in the pathway amino-acid biosynthesis; L-homocysteine biosynthesis; L-homocysteine from S-adenosyl-L-homocysteine: step 1/1. In terms of biological role, may play a key role in the regulation of the intracellular concentration of adenosylhomocysteine. The sequence is that of Adenosylhomocysteinase from Parasynechococcus marenigrum (strain WH8102).